The chain runs to 395 residues: S-adenosylmethionine synthase (395 aa).

Histidine 15 is an ATP binding site. Aspartate 17 is a Mg(2+) binding site. Glutamate 43 provides a ligand contact to K(+). An L-methionine-binding site is contributed by glutamine 99. The segment at glutamine 99–glutamate 109 is flexible loop. ATP contacts are provided by residues aspartate 174–lysine 176, arginine 240–phenylalanine 241, aspartate 249, arginine 255–lysine 256, alanine 272, and lysine 276. Aspartate 249 is an L-methionine binding site. Lysine 280 contributes to the L-methionine binding site.

It belongs to the AdoMet synthase family. In terms of assembly, homotetramer; dimer of dimers. Mg(2+) serves as cofactor. The cofactor is K(+).

It localises to the cytoplasm. It carries out the reaction L-methionine + ATP + H2O = S-adenosyl-L-methionine + phosphate + diphosphate. It participates in amino-acid biosynthesis; S-adenosyl-L-methionine biosynthesis; S-adenosyl-L-methionine from L-methionine: step 1/1. Catalyzes the formation of S-adenosylmethionine (AdoMet) from methionine and ATP. The overall synthetic reaction is composed of two sequential steps, AdoMet formation and the subsequent tripolyphosphate hydrolysis which occurs prior to release of AdoMet from the enzyme. The polypeptide is S-adenosylmethionine synthase (Moorella thermoacetica (strain ATCC 39073 / JCM 9320)).